We begin with the raw amino-acid sequence, 192 residues long: Pyridoxal 5'-phosphate synthase subunit PdxT (192 aa).

Residue 53–55 participates in L-glutamine binding; it reads GES. The active-site Nucleophile is the C82. L-glutamine contacts are provided by residues R108 and 134-135; that span reads IR. Active-site charge relay system residues include H170 and E172.

This sequence belongs to the glutaminase PdxT/SNO family. In terms of assembly, in the presence of PdxS, forms a dodecamer of heterodimers. Only shows activity in the heterodimer.

The enzyme catalyses aldehydo-D-ribose 5-phosphate + D-glyceraldehyde 3-phosphate + L-glutamine = pyridoxal 5'-phosphate + L-glutamate + phosphate + 3 H2O + H(+). It carries out the reaction L-glutamine + H2O = L-glutamate + NH4(+). It participates in cofactor biosynthesis; pyridoxal 5'-phosphate biosynthesis. In terms of biological role, catalyzes the hydrolysis of glutamine to glutamate and ammonia as part of the biosynthesis of pyridoxal 5'-phosphate. The resulting ammonia molecule is channeled to the active site of PdxS. This chain is Pyridoxal 5'-phosphate synthase subunit PdxT, found in Methanosphaera stadtmanae (strain ATCC 43021 / DSM 3091 / JCM 11832 / MCB-3).